Reading from the N-terminus, the 478-residue chain is Capsid vertex component 1 (478 aa).

Residues 131–184 form a disordered region; sequence PRGPESEGEGGKDGGAGRGDGEASRESPLERIAAEASGPGPGSGRGRSAGGRRA. Positions 149–163 are enriched in basic and acidic residues; the sequence is GDGEASRESPLERIA. Gly residues predominate over residues 169–179; sequence PGPGSGRGRSA.

This sequence belongs to the herpesviridae CVC1 protein family. In terms of assembly, interacts (via C-terminus) with capsid vertex component 2/CVC2.

Its subcellular location is the virion. It is found in the host nucleus. Its function is as follows. Capsid vertex-specific component that plays a role during viral DNA encapsidation, assuring correct genome cleavage and presumably stabilizing capsids that contain full-length viral genomes. This is Capsid vertex component 1 from Equus caballus (Horse).